Consider the following 365-residue polypeptide: Phosphate acyltransferase (365 aa).

This sequence belongs to the PlsX family. Homodimer. Probably interacts with PlsY.

The protein localises to the cytoplasm. The catalysed reaction is a fatty acyl-[ACP] + phosphate = an acyl phosphate + holo-[ACP]. Its pathway is lipid metabolism; phospholipid metabolism. Catalyzes the reversible formation of acyl-phosphate (acyl-PO(4)) from acyl-[acyl-carrier-protein] (acyl-ACP). This enzyme utilizes acyl-ACP as fatty acyl donor, but not acyl-CoA. The polypeptide is Phosphate acyltransferase (Picosynechococcus sp. (strain ATCC 27264 / PCC 7002 / PR-6) (Agmenellum quadruplicatum)).